Reading from the N-terminus, the 556-residue chain is mRNA-capping enzyme subunit beta (556 aa).

2 disordered regions span residues 1–28 and 56–217; these read MKPS…DNNV and LPPV…QKTS. Residues 63–74 are compositionally biased toward polar residues; it reads VSTSDTGNTSHT. A compositionally biased stretch (acidic residues) spans 85–96; sequence ESDETDTDDEPG. Basic and acidic residues-rich tracts occupy residues 103–131 and 139–212; these read TKFR…KDKQ and IQLD…KDIF.

The protein belongs to the fungal TPase family. Heterodimer. The mRNA-capping enzyme is composed of two separate chains alpha and beta, respectively a mRNA guanylyltransferase and an mRNA 5'-triphosphate monophosphatase. Mg(2+) is required as a cofactor.

The protein resides in the nucleus. It catalyses the reaction a 5'-end triphospho-ribonucleoside in mRNA + H2O = a 5'-end diphospho-ribonucleoside in mRNA + phosphate + H(+). Its function is as follows. First step of mRNA capping. Converts the 5'-triphosphate end of a nascent mRNA chain into a diphosphate end. This is mRNA-capping enzyme subunit beta (CET1) from Kluyveromyces lactis (strain ATCC 8585 / CBS 2359 / DSM 70799 / NBRC 1267 / NRRL Y-1140 / WM37) (Yeast).